We begin with the raw amino-acid sequence, 493 residues long: Transcript termination protein A18 (493 aa).

The Helicase ATP-binding domain maps to 100–256 (MIESKRPLYI…NSIINIAKLS (157 aa)). 113–120 (LACGFGKT) lines the ATP pocket. Positions 206–209 (DESH) match the DESH box motif.

The protein belongs to the helicase family. Poxviruses subfamily. In terms of assembly, interacts with G2. Might be part of a transcription complex composed at least of G2, A18, and H5.

It is found in the virion. DNA helicase which seems to act as a postreplicative transcription termination factor. Involved in ATP-dependent release of nascent RNA. Forms a stable complex with single-stranded DNA, and to a lesser extent RNA. The chain is Transcript termination protein A18 from Rabbitpox virus (strain Utrecht) (RPV).